The following is a 425-amino-acid chain: Adenylosuccinate synthetase (425 aa).

Residues 12–18 and 40–42 each bind GTP; these read GDEGKGK and GHT. Residue Asp-13 is the Proton acceptor of the active site. Mg(2+)-binding residues include Asp-13 and Gly-40. IMP contacts are provided by residues 13–16, 38–41, Thr-130, Arg-144, Gln-225, Thr-240, and Arg-304; these read DEGK and NAGH. Catalysis depends on His-41, which acts as the Proton donor. 300–306 contacts substrate; sequence ATTGRPR. Residues Arg-306, 332-334, and 414-416 each bind GTP; these read KLD and SVG.

The protein belongs to the adenylosuccinate synthetase family. In terms of assembly, homodimer. It depends on Mg(2+) as a cofactor.

Its subcellular location is the cytoplasm. It carries out the reaction IMP + L-aspartate + GTP = N(6)-(1,2-dicarboxyethyl)-AMP + GDP + phosphate + 2 H(+). It functions in the pathway purine metabolism; AMP biosynthesis via de novo pathway; AMP from IMP: step 1/2. Plays an important role in the de novo pathway of purine nucleotide biosynthesis. Catalyzes the first committed step in the biosynthesis of AMP from IMP. This Desulfovibrio desulfuricans (strain ATCC 27774 / DSM 6949 / MB) protein is Adenylosuccinate synthetase.